The chain runs to 234 residues: uncharacterized protein (234 aa).

3 helical membrane passes run 32–52, 62–82, and 106–126; these read GLRT…VSVL, IPAQ…LKEG, and QGLF…NIAL.

Belongs to the MgtC/SapB family.

It is found in the cell membrane. This is an uncharacterized protein from Synechocystis sp. (strain ATCC 27184 / PCC 6803 / Kazusa).